The sequence spans 392 residues: Nucleosome assembly protein 1-like 1-A (392 aa).

The segment at 1 to 37 (MANIDNKGQTELDQQDMEDVEDVEEEETGEDANSKAR) is disordered. The span at 13–30 (DQQDMEDVEDVEEEETGE) shows a compositional bias: acidic residues. Residues 126–150 (YEPTEEECEWKVEEEDISGDLKEKA) carry the NAP1L motif motif. The short motif at 273-279 (IKKKQKH) is the Nuclear localization signal element. Acidic residues predominate over residues 346-377 (AIEDDDDDYDEEGEEADDEEGEEEADEDNDPD). The interval 346 to 392 (AIEDDDDDYDEEGEEADDEEGEEEADEDNDPDYEPKKGQNPAECKQQ) is disordered.

It belongs to the nucleosome assembly protein (NAP) family. As to quaternary structure, forms homomultimers. Interacts with histone B4. Interacts with the B-type cyclins ccnb1 and ccnb2. In terms of processing, phosphorylated by cyclin B-cdc2 kinase complexes. As to expression, initially expressed throughout the embryo with expression higher at the animal pole. Becomes localized to presumptive ectoderm by gastrula stages. By stage 18 (neurula), expressed in the neural plate and posterior to the cement gland. In late neurula/early tailbud stages, expressed in the neural crest, neural tube, eyes, tailbud and ventral blood islands. Adult expression is predominantly in ovaries.

It is found in the cytoplasm. Its subcellular location is the nucleus. Acts as a chaperone for the linker histone to facilitate deposition of histone B4 onto linker DNA. Required for both remodeling of sperm chromatin into nucleosomes, and linker histone binding to nucleosome core dimers. Plays a role in tissue-specific gene regulation. Required for primitive hemopoiesis, acting upstream of tal1/scl. In Xenopus laevis (African clawed frog), this protein is Nucleosome assembly protein 1-like 1-A (nap1l1-a).